The chain runs to 237 residues: Lysophospholipase-like protein 1 (237 aa).

Ala2 carries the N-acetylalanine modification. Active-site charge relay system residues include Ser124, Asp179, and His211.

This sequence belongs to the AB hydrolase superfamily. AB hydrolase 2 family.

The protein resides in the cytoplasm. It is found in the cytosol. The enzyme catalyses S-hexadecanoyl-L-cysteinyl-[protein] + H2O = L-cysteinyl-[protein] + hexadecanoate + H(+). Its function is as follows. Palmitoyl thioesterase that catalyzes depalmitoylation of CGAS and KCNMA1. Acts as a regulator of innate immunity by mediating depalmitoylation of CGAS, thereby preventing CGAS homodimerization and cyclic GMP-AMP synthase activity. Does not exhibit phospholipase nor triacylglycerol lipase activity, able to hydrolyze only short chain substrates due to its shallow active site. This Pongo abelii (Sumatran orangutan) protein is Lysophospholipase-like protein 1.